Reading from the N-terminus, the 413-residue chain is Zinc finger CCCH domain-containing protein 6 (413 aa).

3 disordered regions span residues 28-61 (PSQV…FGGP), 159-191 (DSAS…TLPA), and 333-356 (QPGG…RDSK). Residues 176 to 189 (PSITDENTSTSSTL) are compositionally biased toward polar residues. The C3H1-type zinc-finger motif lies at 357–385 (PKIMKACMYFNSARGCRHGANCMYQHDAT). The span at 389–403 (PRNLNNGNINTSDMQ) shows a compositional bias: polar residues. Positions 389–413 (PRNLNNGNINTSDMQNAKRMRFDRD) are disordered.

This chain is Zinc finger CCCH domain-containing protein 6, found in Arabidopsis thaliana (Mouse-ear cress).